A 232-amino-acid chain; its full sequence is MDVAVVILYSRDDALDLLYRTLHYWWKRSDGLRGQIYVVSNTNVLLPRYAKLIQQKRKGVGGARCDAIESTSEDYIIFSDGHVTPPREISKMLVEPWSSVPINHIILPFGTSGRVAYSLPFMPDERQFLWCSCSKYKEEITTTGEPIVAMSRKYISMSKCYTSYGLDLFQFTLRMPPGQLIGDEGIHFIEAKKLISNRKPNKDEMKDFYDTIYIKRKSEIEEEIKECFCRAL.

This is an uncharacterized protein from Thermoproteus tenax (TTV1).